The chain runs to 132 residues: Evasin P985 (132 aa).

The signal sequence occupies residues 1 to 24; sequence MHSTIAYVSLLPLALFVAMHGAST. 6 N-linked (GlcNAc...) asparagine glycosylation sites follow: asparagine 45, asparagine 69, asparagine 74, asparagine 103, asparagine 111, and asparagine 117. Cystine bridges form between cysteine 48/cysteine 70, cysteine 66/cysteine 109, cysteine 83/cysteine 114, and cysteine 104/cysteine 123.

Its subcellular location is the secreted. Functionally, salivary chemokine-binding protein which binds to host chemokine CCL5. This is Evasin P985 from Amblyomma parvum (South American tick).